A 569-amino-acid chain; its full sequence is Archaeosine synthase (569 aa).

Residues 495 to 569 (SGGKDINYIE…ALVNIRNVKS (75 aa)) form the PUA domain.

Belongs to the archaeosine synthase type 1 family. In terms of assembly, homodimer.

It catalyses the reaction 7-cyano-7-carbaguanosine(15) in tRNA + L-glutamine + H2O = archaeosine(15) in tRNA + L-glutamate. It participates in tRNA modification; archaeosine-tRNA biosynthesis. Is responsible for the final step in the biosynthesis of archaeosine, a modified nucleoside present in the dihydrouridine loop (D-loop) of archaeal tRNA. Catalyzes the conversion of 7-cyano-7-deazaguanine (preQ0)-modified tRNA to archaeosine-tRNA, transforming a nitrile group to a formamidine group. Can use either glutamine, asparagine or ammonium as amino donor. In Methanocaldococcus jannaschii (strain ATCC 43067 / DSM 2661 / JAL-1 / JCM 10045 / NBRC 100440) (Methanococcus jannaschii), this protein is Archaeosine synthase.